Reading from the N-terminus, the 169-residue chain is Cell division inhibitor SulA (169 aa).

Positions 106-112 (ALRTGNY) are ftsZ binding. Residues 162–169 (KIHSNLYH) are lon protease binding.

Belongs to the SulA family. As to quaternary structure, interacts with FtsZ. Post-translationally, is rapidly cleaved and degraded by the Lon protease once DNA damage is repaired.

Component of the SOS system and an inhibitor of cell division. Accumulation of SulA causes rapid cessation of cell division and the appearance of long, non-septate filaments. In the presence of GTP, binds a polymerization-competent form of FtsZ in a 1:1 ratio, thus inhibiting FtsZ polymerization and therefore preventing it from participating in the assembly of the Z ring. This mechanism prevents the premature segregation of damaged DNA to daughter cells during cell division. The protein is Cell division inhibitor SulA of Escherichia fergusonii (strain ATCC 35469 / DSM 13698 / CCUG 18766 / IAM 14443 / JCM 21226 / LMG 7866 / NBRC 102419 / NCTC 12128 / CDC 0568-73).